Consider the following 317-residue polypeptide: Ornithine carbamoyltransferase (317 aa).

Carbamoyl phosphate contacts are provided by residues 54–57, Gln-81, Arg-105, and 132–135; these read STRT and HPCQ. Residues Asn-163, Asp-227, and 231–232 each bind L-ornithine; that span reads SM. Carbamoyl phosphate-binding positions include 267–268 and Arg-295; that span reads CL.

This sequence belongs to the aspartate/ornithine carbamoyltransferase superfamily. OTCase family.

The protein localises to the cytoplasm. The enzyme catalyses carbamoyl phosphate + L-ornithine = L-citrulline + phosphate + H(+). It participates in amino-acid biosynthesis; L-arginine biosynthesis; L-arginine from L-ornithine and carbamoyl phosphate: step 1/3. Its function is as follows. Reversibly catalyzes the transfer of the carbamoyl group from carbamoyl phosphate (CP) to the N(epsilon) atom of ornithine (ORN) to produce L-citrulline. In Parafrankia sp. (strain EAN1pec), this protein is Ornithine carbamoyltransferase.